A 272-amino-acid chain; its full sequence is F-actin-capping protein subunit beta (272 aa).

Ser-2 is modified (N-acetylserine). Ser-2 carries the post-translational modification Phosphoserine. Lys-235 is subject to N6-acetyllysine. Val-263 carries the post-translational modification Phosphoserine.

It belongs to the F-actin-capping protein beta subunit family. Component of the F-actin capping complex, composed of a heterodimer of an alpha and a beta subunit. Subunit of dynactin, a multiprotein complex part of a tripartite complex with dynein and a adapter, such as BICDL1, BICD2 or HOOK3. The dynactin complex is built around ACTR1A/ACTB filament and consists of an actin-related filament composed of a shoulder domain, a pointed end and a barbed end. Its length is defined by its flexible shoulder domain. The soulder is composed of 2 DCTN1 subunits, 4 DCTN2 and 2 DCTN3. The 4 DCNT2 (via N-terminus) bind the ACTR1A filament and act as molecular rulers to determine the length. The pointed end is important for binding dynein-dynactin cargo adapters. Consists of 4 subunits: ACTR10, DCNT4, DCTN5 and DCTN6. The barbed end is composed of a CAPZA1:CAPZB heterodimers, which binds ACTR1A/ACTB filament and dynactin and stabilizes dynactin. Interacts with ARHGAP17. Interaction with RCSD1/CAPZIP. Component of the WASH complex, composed of F-actin-capping protein subunit alpha (CAPZA1, CAPZA2 or CAPZA3), F-actin-capping protein subunit beta (CAPZB), WASH (WASHC1, WASH2P, WASH3P, WASH4P, WASH5P or WASH6P), WASHC2 (WASHC2A or WASHC2C), WASHC3, WASHC4 and WASHC5. Interacts with ACTG1. Directly interacts with CRACD; this interaction decreases binding to actin.

Its subcellular location is the cytoplasm. The protein localises to the cytoskeleton. It is found in the myofibril. The protein resides in the sarcomere. In terms of biological role, F-actin-capping proteins bind in a Ca(2+)-independent manner to the fast growing ends of actin filaments (barbed end) thereby blocking the exchange of subunits at these ends. Unlike other capping proteins (such as gelsolin and severin), these proteins do not sever actin filaments. Plays a role in the regulation of cell morphology and cytoskeletal organization. Forms, with CAPZB, the barbed end of the fast growing ends of actin filaments in the dynactin complex and stabilizes dynactin structure. The dynactin multiprotein complex activates the molecular motor dynein for ultra-processive transport along microtubules. The chain is F-actin-capping protein subunit beta from Homo sapiens (Human).